The chain runs to 410 residues: Phytoene synthase 1, chloroplastic (410 aa).

The transit peptide at M1–Y62 directs the protein to the chloroplast.

It belongs to the phytoene/squalene synthase family. Monomer. Expressed in embryos, endosperm and seedling leaves. Expressed in leaves and endosperm.

It is found in the plastid. The protein resides in the chloroplast stroma. It carries out the reaction 2 (2E,6E,10E)-geranylgeranyl diphosphate = 15-cis-phytoene + 2 diphosphate. It participates in carotenoid biosynthesis; phytoene biosynthesis; all-trans-phytoene from geranylgeranyl diphosphate: step 1/1. In terms of biological role, catalyzes the conversion of geranylgeranyl diphosphate to phytoene. Mediates the first committed step in carotenoid biosynthesis. The polypeptide is Phytoene synthase 1, chloroplastic (Zea mays (Maize)).